Reading from the N-terminus, the 806-residue chain is Lysine-specific demethylase JMJ15 (806 aa).

Positions 1 to 43 (MEPFSAAQNKEDKDTSVEPPRRRCHRKNKGTNVEPPSSPYHPK) are disordered. Over residues 9–21 (NKEDKDTSVEPPR) the composition is skewed to basic and acidic residues. The JmjN domain occupies 61–102 (APVFHPTSEEFEDTLAYIEKIRPLAESFGICRIVPPSNWSPP). The tract at residues 128–176 (NRGPVKKKTPKGRKRKRGKYSRTVAPKKRNGSVSKSVSTPKATEEENFG) is disordered. The segment covering 131–157 (PVKKKTPKGRKRKRGKYSRTVAPKKRN) has biased composition (basic residues). Positions 132 to 139 (VKKKTPKG) match the Nuclear localization signal motif. Over residues 158 to 168 (GSVSKSVSTPK) the composition is skewed to polar residues. Residues 261 to 427 (KYISSGWNLN…HGQNAVEIYS (167 aa)) form the JmjC domain. The Fe cation site is built by histidine 307, glutamate 309, and histidine 395. 8 residues coordinate Zn(2+): cysteine 514, cysteine 517, cysteine 528, cysteine 531, cysteine 539, histidine 542, cysteine 545, and cysteine 547. A C5HC2 zinc finger spans residues 514–566 (CISCFSDLHLSATGCKNCSSLEEYGCTKHDICSCEGKDRFIFLRYTIDELSSL). Residues 629 to 687 (IMDLAAYHVEPINLGFLVVGKLWCNKHAIFPKGFKSRVKFYNVQDPMRISYYVSEIVDA) form the FYR N-terminal domain. In terms of domain architecture, FYR C-terminal spans 689–775 (LLGPLFKVTL…HGQVEYWNHK (87 aa)).

Belongs to the JARID1 histone demethylase family. The cofactor is Fe(2+). As to expression, expressed in roots, cotyledons, shoot apex, rosette and cauline leaves, stems, inflorescences and siliques. Expressed at low levels during vegetative growth but to higher levels in young floral organs.

Its subcellular location is the nucleus. It carries out the reaction N(6),N(6),N(6)-trimethyl-L-lysyl(4)-[histone H3] + 2-oxoglutarate + O2 = N(6),N(6)-dimethyl-L-lysyl(4)-[histone H3] + formaldehyde + succinate + CO2. Functionally, histone demethylase that demethylates 'Lys-4' (H3K4me) of histone H3 with a specific activity for H3K4me3. No activity on H3K4me2, H3K4me1, H3K9me3/2, H3K27me3/2 and H3K36me3/2. Involved in the control of flowering time by demethylating H3K4me3 at the FLC locus and repressing its expression. The repression of FLC level and reduction in H3K4me3 at the FLC locus results in induction of the flowering activator FT, which is a downstream target of FLC. Promotes salt tolerance by down-regulating the expression of several transcriptions factors involved in stress responses via H3K4me3 and H3K4me2 demethylation. The sequence is that of Lysine-specific demethylase JMJ15 from Arabidopsis thaliana (Mouse-ear cress).